A 299-amino-acid polypeptide reads, in one-letter code: GTPase Era (299 aa).

The Era-type G domain occupies 9 to 177; the sequence is RSGSVAVIGR…VGDLLKLVPE (169 aa). Residues 17 to 24 are G1; it reads GRPNVGKS. 17–24 lines the GTP pocket; it reads GRPNVGKS. The tract at residues 43 to 47 is G2; it reads QTTRH. The G3 stretch occupies residues 64 to 67; the sequence is DTPG. GTP-binding positions include 64–68 and 126–129; these read DTPGL and NKVD. The interval 126–129 is G4; it reads NKVD. The interval 156–158 is G5; sequence VSA. The 85-residue stretch at 200-284 folds into the KH type-2 domain; it reads VREQLMRQLG…FLETWVRVRE (85 aa).

It belongs to the TRAFAC class TrmE-Era-EngA-EngB-Septin-like GTPase superfamily. Era GTPase family. In terms of assembly, monomer.

Its subcellular location is the cytoplasm. The protein resides in the cell inner membrane. Functionally, an essential GTPase that binds both GDP and GTP, with rapid nucleotide exchange. Plays a role in 16S rRNA processing and 30S ribosomal subunit biogenesis and possibly also in cell cycle regulation and energy metabolism. The polypeptide is GTPase Era (Xanthomonas oryzae pv. oryzae (strain MAFF 311018)).